A 402-amino-acid polypeptide reads, in one-letter code: Propionate kinase (402 aa).

2 residues coordinate ATP: N11 and K18. Position 11 (N11) interacts with Mg(2+). Residue R86 participates in substrate binding. The Proton donor/acceptor role is filled by D143. Residues H175, 203-207 (HLGNG), 278-280 (DLR), and 326-330 (GIGEN) contribute to the ATP site.

It belongs to the acetokinase family. TdcD subfamily. Homodimer. The cofactor is Mg(2+).

It carries out the reaction propanoate + ATP = propanoyl phosphate + ADP. Its pathway is amino-acid degradation; L-threonine degradation via propanoate pathway; propanoate from L-threonine: step 4/4. Its function is as follows. Catalyzes the conversion of propionyl phosphate and ADP to propionate and ATP. The chain is Propionate kinase from Escherichia coli O6:H1 (strain CFT073 / ATCC 700928 / UPEC).